A 130-amino-acid chain; its full sequence is ATP synthase epsilon chain (130 aa).

The protein belongs to the ATPase epsilon chain family. F-type ATPases have 2 components, CF(1) - the catalytic core - and CF(0) - the membrane proton channel. CF(1) has five subunits: alpha(3), beta(3), gamma(1), delta(1), epsilon(1). CF(0) has three main subunits: a, b and c.

Its subcellular location is the cell inner membrane. Functionally, produces ATP from ADP in the presence of a proton gradient across the membrane. The protein is ATP synthase epsilon chain (atpC) of Fuscovulum blasticum (Rhodobacter blasticus).